The following is a 71-amino-acid chain: Putative membrane protein insertion efficiency factor (71 aa).

It belongs to the UPF0161 family.

The protein localises to the cell membrane. Could be involved in insertion of integral membrane proteins into the membrane. The sequence is that of Putative membrane protein insertion efficiency factor from Acetivibrio thermocellus (strain ATCC 27405 / DSM 1237 / JCM 9322 / NBRC 103400 / NCIMB 10682 / NRRL B-4536 / VPI 7372) (Clostridium thermocellum).